Reading from the N-terminus, the 102-residue chain is Small ribosomal subunit protein uS10 (102 aa).

This sequence belongs to the universal ribosomal protein uS10 family. In terms of assembly, part of the 30S ribosomal subunit.

Its function is as follows. Involved in the binding of tRNA to the ribosomes. The protein is Small ribosomal subunit protein uS10 of Pyrococcus horikoshii (strain ATCC 700860 / DSM 12428 / JCM 9974 / NBRC 100139 / OT-3).